A 736-amino-acid polypeptide reads, in one-letter code: Subtilisin-like protease SBT4.11 (736 aa).

The first 25 residues, 1–25 (MAKRGAFSSFHSFLIVLLFLNSVLA), serve as a signal peptide directing secretion. Residues 26–113 (VTHGHQDKQV…VFPNKKLKLQ (88 aa)) constitute a propeptide, activation peptide. An Inhibitor I9 domain is found at 35–112 (VYIVYMGSLP…SVFPNKKLKL (78 aa)). Residues 117–579 (SWDFMGLKEG…AGHVDPIAAT (463 aa)) enclose the Peptidase S8 domain. The Charge relay system role is filled by Asp-145. N-linked (GlcNAc...) asparagine glycosylation occurs at Asn-176. His-200 serves as the catalytic Charge relay system. Residues Asn-215 and Asn-223 are each glycosylated (N-linked (GlcNAc...) asparagine). Residues 355-437 (KFPLVYGKSA…GLQKDDFESV (83 aa)) enclose the PA domain. Ser-518 (charge relay system) is an active-site residue. N-linked (GlcNAc...) asparagine glycans are attached at residues Asn-555, Asn-602, Asn-638, Asn-646, and Asn-656.

It belongs to the peptidase S8 family. The C-terminal propeptide is autocleaved.

The protein resides in the secreted. This is Subtilisin-like protease SBT4.11 from Arabidopsis thaliana (Mouse-ear cress).